The chain runs to 261 residues: ClpXP adapter protein SpxH (261 aa).

It belongs to the SpxH family. In terms of assembly, interacts with Spx.

Its subcellular location is the cytoplasm. Adapter protein required for efficient degradation of Spx by ClpXP under non-stress conditions. Interaction with Spx stabilizes Spx and exposes the C-terminus of Spx for recognition and proteolysis by ClpXP. The polypeptide is ClpXP adapter protein SpxH (Staphylococcus aureus).